Consider the following 490-residue polypeptide: Polyamine oxidase 2 (490 aa).

The FAD site is built by Glu57, Arg65, Val246, and Glu433. Positions 488 to 490 (SRL) match the Microbody targeting signal motif.

The protein belongs to the flavin monoamine oxidase family. Requires FAD as cofactor. In terms of tissue distribution, highly expressed in flowers and siliques. Also found in leaf and stem and in low levels in cotyledons, roots and in seedlings.

It is found in the peroxisome. It carries out the reaction spermine + O2 + H2O = 3-aminopropanal + spermidine + H2O2. The enzyme catalyses N(1)-acetylspermine + O2 + H2O = 3-acetamidopropanal + spermidine + H2O2. It catalyses the reaction spermidine + O2 + H2O = 3-aminopropanal + putrescine + H2O2. The protein operates within amine and polyamine degradation; spermine degradation. Its pathway is amine and polyamine degradation; spermidine degradation. In terms of biological role, flavoenzyme involved in polyamine back-conversion. Catalyzes the oxidation of the secondary amino group of polyamines, such as spermine, spermidine and their acetyl derivatives. Substrate preference is N(1)-acetylspermine &gt; spermine &gt; spermidine. Plays an important role in the regulation of polyamine intracellular concentration. Involved in abscisic acid-mediated developmental processes. May contribute to nitric oxide-mediated effects on root growth. The sequence is that of Polyamine oxidase 2 from Arabidopsis thaliana (Mouse-ear cress).